A 112-amino-acid chain; its full sequence is Small ribosomal subunit protein uS17 (112 aa).

The protein belongs to the universal ribosomal protein uS17 family. Part of the 30S ribosomal subunit.

Functionally, one of the primary rRNA binding proteins, it binds specifically to the 5'-end of 16S ribosomal RNA. The sequence is that of Small ribosomal subunit protein uS17 from Thermotoga neapolitana (strain ATCC 49049 / DSM 4359 / NBRC 107923 / NS-E).